Here is a 114-residue protein sequence, read N- to C-terminus: Transcription factor S1 (114 aa).

Residues 1–43 are N-ZR; it reads MIVVKFCPKCNSMMVPKKSNGKNVYRCTKCGYEKEVPETTIVV. Zn(2+) contacts are provided by C7, C10, C27, C30, C75, and C78. Residues 63-114 form a C-ZR region; it reads MPSGAQKIKGVLCPSCKNDEAYFWILQTRRADEPPTRFYKCTKCGKVWREYE. The segment at 71–111 adopts a TFIIS-type zinc-finger fold; that stretch reads KGVLCPSCKNDEAYFWILQTRRADEPPTRFYKCTKCGKVWR. Active-site residues include D94 and E95. Positions 103 and 106 each coordinate Zn(2+).

Belongs to the archaeal RpoM/eukaryotic RPA12/RPB9/RPC11 RNA polymerase family. As to quaternary structure, interacts with RNA polymerase; probably competes with TFS4 for the same binding site. Zn(2+) is required as a cofactor.

In terms of biological role, induces RNA cleavage activity in the RNA polymerase. Induces rapid cleavage of a stalled transcription elongation complex with a 2-nucleotide reduction at the 3' end of the nascent RNA. Truncated RNA is able to resume elongation. During transcription elongation it enhances processivity. Involved in transcriptional proofreading and fidelity. Misincorporation of nucleotides during elongation of transcription leads to arrested elongation complexes which are rescued by TFS-promoted removal of a dinucleotide from the 3'-end. TFS1 is able to induce a cleavage resynthesis cycle in stalled elongation complexes (resulting from the next missing nucleotide or a reduced incorporation rate of a wrong nucleotide) preventing misincorporation and enabling proofreading in a post-incorporation manner. Pausing of elongation complexes is the main determinant of TFS-induced RNA cleavage. In Saccharolobus solfataricus (strain ATCC 35092 / DSM 1617 / JCM 11322 / P2) (Sulfolobus solfataricus), this protein is Transcription factor S1.